The primary structure comprises 162 residues: MSDKIGLFTGSFDPMTNGHLDIIERASRLFDKLYVGIFFNPHKQGFLPLENRKRGLEKAVKHLGNVKVVSSHDKLVVDVAKRLGATCLVRGLRNASDLQYEASFDYYNHQLSSDIETIYLHSRPEHLYISSSGVRELLKFGQDIACYVPESILEEIRNEKKD.

S11 serves as a coordination point for substrate. ATP contacts are provided by residues 11–12 (SF) and H19. Substrate-binding residues include K43, V76, and R90. Residues 91-93 (GLR), E101, and 126-132 (HLYISSS) contribute to the ATP site.

Belongs to the bacterial CoaD family. As to quaternary structure, homohexamer. It depends on Mg(2+) as a cofactor.

Its subcellular location is the cytoplasm. It carries out the reaction (R)-4'-phosphopantetheine + ATP + H(+) = 3'-dephospho-CoA + diphosphate. Its pathway is cofactor biosynthesis; coenzyme A biosynthesis; CoA from (R)-pantothenate: step 4/5. In terms of biological role, reversibly transfers an adenylyl group from ATP to 4'-phosphopantetheine, yielding dephospho-CoA (dPCoA) and pyrophosphate. In Streptococcus pneumoniae (strain 70585), this protein is Phosphopantetheine adenylyltransferase.